The following is a 123-amino-acid chain: Large ribosomal subunit protein bL12 (123 aa).

Belongs to the bacterial ribosomal protein bL12 family. As to quaternary structure, homodimer. Part of the ribosomal stalk of the 50S ribosomal subunit. Forms a multimeric L10(L12)X complex, where L10 forms an elongated spine to which 2 to 4 L12 dimers bind in a sequential fashion. Binds GTP-bound translation factors.

In terms of biological role, forms part of the ribosomal stalk which helps the ribosome interact with GTP-bound translation factors. Is thus essential for accurate translation. This is Large ribosomal subunit protein bL12 from Laribacter hongkongensis (strain HLHK9).